The following is a 728-amino-acid chain: E3 ubiquitin-protein ligase LNX (728 aa).

The segment at 45–83 (CHICLQALLDPLDTPCGHTYCTLCLTNFLVEKDFCPVDR) adopts an RING-type zinc-finger fold. The NPXY motif signature appears at 185 to 188 (NPAY). A disordered region spans residues 185 to 220 (NPAYVSSVEDGEPVANSSDSGRSNRTRARPFERSTM). An interaction with MAGEB18 region spans residues 186–244 (PAYVSSVEDGEPVANSSDSGRSNRTRARPFERSTMRSRSFKKINRALSALRRTKSGSVV). PDZ domains are found at residues 278–362 (SIKI…VLRE) and 385–467 (HVIL…VSRQ). Position 445 is a phosphoserine (Ser-445). Residues 481–500 (WISNGQQSPGPGERNTASKP) are disordered. PDZ domains follow at residues 508–593 (VVSV…ALEV) and 638–723 (DVIL…IASW).

In terms of assembly, interacts with CXADR. Interacts with MAGEB18 and MAGEF1. Interacts with the phosphotyrosine interaction domain of all isoforms of NUMB. IGSF5/JAM4 interacts with isoform 2 through the second PDZ domain, other isoforms may also interact with IGSF5/JAM4. In terms of tissue distribution, isoform 1 and isoform 2 are expressed in the heart. Isoform 1 is also expressed in kidney, lung and skeletal muscle while isoform 2 is also expressed in brain.

It localises to the cytoplasm. The catalysed reaction is S-ubiquitinyl-[E2 ubiquitin-conjugating enzyme]-L-cysteine + [acceptor protein]-L-lysine = [E2 ubiquitin-conjugating enzyme]-L-cysteine + N(6)-ubiquitinyl-[acceptor protein]-L-lysine.. The protein operates within protein modification; protein ubiquitination. Functionally, E3 ubiquitin-protein ligase that mediates ubiquitination and subsequent proteasomal degradation of NUMB. E3 ubiquitin ligases accept ubiquitin from an E2 ubiquitin-conjugating enzyme in the form of a thioester and then directly transfers the ubiquitin to targeted substrates. Mediates ubiquitination of isoform p66 and isoform p72 of NUMB, but not that of isoform p71 or isoform p65. Isoform 2 provides an endocytic scaffold for IGSF5/JAM4. This Mus musculus (Mouse) protein is E3 ubiquitin-protein ligase LNX (Lnx1).